Reading from the N-terminus, the 37-residue chain is Cytochrome b6-f complex subunit 5 (37 aa).

A helical membrane pass occupies residues 5 to 25 (LLSGVVLGLILVTLSGLFFAA).

Belongs to the PetG family. The 4 large subunits of the cytochrome b6-f complex are cytochrome b6, subunit IV (17 kDa polypeptide, PetD), cytochrome f and the Rieske protein, while the 4 small subunits are PetG, PetL, PetM and PetN. The complex functions as a dimer.

The protein resides in the cellular thylakoid membrane. Component of the cytochrome b6-f complex, which mediates electron transfer between photosystem II (PSII) and photosystem I (PSI), cyclic electron flow around PSI, and state transitions. PetG is required for either the stability or assembly of the cytochrome b6-f complex. The chain is Cytochrome b6-f complex subunit 5 from Trichodesmium erythraeum (strain IMS101).